The following is a 490-amino-acid chain: Cardiolipin synthase A (490 aa).

The next 2 membrane-spanning stretches (helical) occupy residues 20-40 (LGLL…HAVL) and 49-69 (IAWA…YLVF). PLD phosphodiesterase domains follow at residues 229-256 (VNFR…GVEY) and 403-430 (QPGF…DNRS). Residues His-234, Lys-236, Asp-241, His-408, Lys-410, and Asp-415 contribute to the active site.

This sequence belongs to the phospholipase D family. Cardiolipin synthase subfamily. ClsA sub-subfamily.

Its subcellular location is the cell inner membrane. It catalyses the reaction 2 a 1,2-diacyl-sn-glycero-3-phospho-(1'-sn-glycerol) = a cardiolipin + glycerol. Functionally, catalyzes the reversible phosphatidyl group transfer from one phosphatidylglycerol molecule to another to form cardiolipin (CL) (diphosphatidylglycerol) and glycerol. The protein is Cardiolipin synthase A of Pseudomonas aeruginosa (strain LESB58).